The chain runs to 427 residues: Adenylosuccinate synthetase (427 aa).

GTP contacts are provided by residues 12-18 (GDEGKGK) and 40-42 (GHT). Catalysis depends on Asp13, which acts as the Proton acceptor. Residues Asp13 and Gly40 each coordinate Mg(2+). Residues 13–16 (DEGK), 38–41 (NAGH), Thr128, Arg142, Gln223, Thr238, and Arg302 contribute to the IMP site. The active-site Proton donor is His41. 298–304 (TVTGRAR) contacts substrate. Residues Arg304, 330 to 332 (RLD), and 412 to 414 (SVG) contribute to the GTP site.

This sequence belongs to the adenylosuccinate synthetase family. As to quaternary structure, homodimer. It depends on Mg(2+) as a cofactor.

It localises to the cytoplasm. It carries out the reaction IMP + L-aspartate + GTP = N(6)-(1,2-dicarboxyethyl)-AMP + GDP + phosphate + 2 H(+). The protein operates within purine metabolism; AMP biosynthesis via de novo pathway; AMP from IMP: step 1/2. Its function is as follows. Plays an important role in the de novo pathway of purine nucleotide biosynthesis. Catalyzes the first committed step in the biosynthesis of AMP from IMP. This Brachyspira hyodysenteriae (strain ATCC 49526 / WA1) protein is Adenylosuccinate synthetase.